The sequence spans 299 residues: 4-hydroxy-3-methylbut-2-enyl diphosphate reductase (299 aa).

[4Fe-4S] cluster is bound at residue Cys-12. (2E)-4-hydroxy-3-methylbut-2-enyl diphosphate-binding residues include His-42 and His-88. The dimethylallyl diphosphate site is built by His-42 and His-88. His-42 and His-88 together coordinate isopentenyl diphosphate. Cys-110 serves as a coordination point for [4Fe-4S] cluster. His-138 is a binding site for (2E)-4-hydroxy-3-methylbut-2-enyl diphosphate. His-138 is a dimethylallyl diphosphate binding site. Position 138 (His-138) interacts with isopentenyl diphosphate. Glu-140 acts as the Proton donor in catalysis. A (2E)-4-hydroxy-3-methylbut-2-enyl diphosphate-binding site is contributed by Thr-177. [4Fe-4S] cluster is bound at residue Cys-205. Ser-233, Asn-235, and Ser-277 together coordinate (2E)-4-hydroxy-3-methylbut-2-enyl diphosphate. The dimethylallyl diphosphate site is built by Ser-233, Asn-235, and Ser-277. Positions 233, 235, and 277 each coordinate isopentenyl diphosphate.

The protein belongs to the IspH family. It depends on [4Fe-4S] cluster as a cofactor.

The enzyme catalyses isopentenyl diphosphate + 2 oxidized [2Fe-2S]-[ferredoxin] + H2O = (2E)-4-hydroxy-3-methylbut-2-enyl diphosphate + 2 reduced [2Fe-2S]-[ferredoxin] + 2 H(+). It catalyses the reaction dimethylallyl diphosphate + 2 oxidized [2Fe-2S]-[ferredoxin] + H2O = (2E)-4-hydroxy-3-methylbut-2-enyl diphosphate + 2 reduced [2Fe-2S]-[ferredoxin] + 2 H(+). It functions in the pathway isoprenoid biosynthesis; dimethylallyl diphosphate biosynthesis; dimethylallyl diphosphate from (2E)-4-hydroxy-3-methylbutenyl diphosphate: step 1/1. The protein operates within isoprenoid biosynthesis; isopentenyl diphosphate biosynthesis via DXP pathway; isopentenyl diphosphate from 1-deoxy-D-xylulose 5-phosphate: step 6/6. Its function is as follows. Catalyzes the conversion of 1-hydroxy-2-methyl-2-(E)-butenyl 4-diphosphate (HMBPP) into a mixture of isopentenyl diphosphate (IPP) and dimethylallyl diphosphate (DMAPP). Acts in the terminal step of the DOXP/MEP pathway for isoprenoid precursor biosynthesis. The sequence is that of 4-hydroxy-3-methylbut-2-enyl diphosphate reductase from Malacoplasma penetrans (strain HF-2) (Mycoplasma penetrans).